Consider the following 647-residue polypeptide: A-type voltage-gated potassium channel KCND1 (647 aa).

Residues 1–183 (MAAGLATWLP…RAFENPHTST (183 aa)) lie on the Cytoplasmic side of the membrane. Residues 2 to 20 (AAGLATWLPFARAAAVGWL) are interaction with KCNIP1, KCNIP2, and other family members. Residues His104, Cys131, and Cys132 each contribute to the Zn(2+) site. The tract at residues 144 to 163 (AERLAEDEEAEQAGDGPALP) is disordered. A helical membrane pass occupies residues 184 to 205 (AALVFYYVTGFFIAVSVIANVV). The Extracellular portion of the chain corresponds to 206-230 (ETIPCRGSARRSSREQPCGERFPQA). Residues 231 to 252 (FFCMDTACVLIFTGEYLLRLFA) form a helical membrane-spanning segment. At 253–263 (APSRCRFLRSV) the chain is on the cytoplasmic side. A helical membrane pass occupies residues 264–284 (MSLIDVVAILPYYIGLLVPKN). The Extracellular segment spans residues 285 to 287 (DDV). Residues 288–308 (SGAFVTLRVFRVFRIFKFSRH) traverse the membrane as a helical; Voltage-sensor segment. Residues 309–323 (SQGLRILGYTLKSCA) are Cytoplasmic-facing. An S4-S5 linker region spans residues 310–323 (QGLRILGYTLKSCA). A helical membrane pass occupies residues 324–345 (SELGFLLFSLTMAIIIFATVMF). Topologically, residues 346-359 (YAEKGTNKTNFTSI) are extracellular. 2 N-linked (GlcNAc...) asparagine glycosylation sites follow: Asn352 and Asn355. Positions 360 to 371 (PAAFWYTIVTMT) form an intramembrane region, helical. A Selectivity filter motif is present at residues 372-377 (TLGYGD). Residues 372–379 (TLGYGDMV) lie within the membrane without spanning it. Topologically, residues 380–386 (PSTIAGK) are extracellular. Residues 387–415 (IFGSICSLSGVLVIALPVPVIVSNFSRIY) traverse the membrane as a helical segment. Topologically, residues 416-647 (HQNQRADKRR…FPETVKISSL (232 aa)) are cytoplasmic. Ser458 carries the post-translational modification Phosphoserine. A required for dendritic targeting region spans residues 474–489 (FEQQHHHLLHCLEKTT). A compositionally biased stretch (low complexity) spans 506-524 (VSPGGRTSRSTSVSSQPVG). The disordered stretch occupies residues 506-531 (VSPGGRTSRSTSVSSQPVGPGSLLSS). Ser555 carries the phosphoserine modification. The disordered stretch occupies residues 601–634 (IPTPPANTPDESQPSSPGGGGRAGSTLRNSSLGT).

It belongs to the potassium channel family. D (Shal) (TC 1.A.1.2) subfamily. Kv4.1/KCND1 sub-subfamily. In terms of assembly, component of heteromultimeric potassium channels. Identified in potassium channel complexes containing KCND1, KCND2, KCND3, KCNIP1, KCNIP2, KCNIP3, KCNIP4, DPP6 and DPP10. In terms of tissue distribution, widely expressed. Highly expressed in brain, in particular in cerebellum and thalamus; detected at lower levels in the other parts of the brain.

It is found in the cell membrane. The enzyme catalyses K(+)(in) = K(+)(out). In terms of biological role, A-type voltage-gated potassium channel that mediates transmembrane potassium transport in excitable membranes in the brain. Mediates A-type current I(SA) in suprachiasmatic nucleus (SCN) neurons. Exhibits a low-threshold A-type current with a hyperpolarized steady-state inactivation midpoint and the recovery process was steeply voltage-dependent, with recovery being markedly faster at more negative potentials. May regulates repetitive firing rates in the suprachiasmatic nucleus (SCN) neurons and circadian rhythms in neuronal excitability and behavior. Contributes to the regulation of the circadian rhythm of action potential firing in suprachiasmatic nucleus neurons, which regulates the circadian rhythm of locomotor activity. The regulatory subunit KCNIP1 modulates the kinetics of channel inactivation, increases the current amplitudes and accelerates recovery from inactivation, shifts activation in a depolarizing direction. The regulatory subunit DPP10 decreases the voltage sensitivity of the inactivation channel gating. The chain is A-type voltage-gated potassium channel KCND1 from Homo sapiens (Human).